Reading from the N-terminus, the 208-residue chain is Redox-sensing transcriptional repressor Rex (208 aa).

The H-T-H motif DNA-binding region spans 16–55; it reads LYYRCLSELNEKGEDKVSSAVLERLLKIDAATVRRDFSYF. 90–95 lines the NAD(+) pocket; sequence GVGNLG.

Belongs to the transcriptional regulatory Rex family. Homodimer.

The protein localises to the cytoplasm. Functionally, modulates transcription in response to changes in cellular NADH/NAD(+) redox state. This is Redox-sensing transcriptional repressor Rex from Pediococcus pentosaceus (strain ATCC 25745 / CCUG 21536 / LMG 10740 / 183-1w).